Here is a 182-residue protein sequence, read N- to C-terminus: Ribosome maturation factor RimP (182 aa).

Belongs to the RimP family.

The protein localises to the cytoplasm. In terms of biological role, required for maturation of 30S ribosomal subunits. The chain is Ribosome maturation factor RimP from Chloroherpeton thalassium (strain ATCC 35110 / GB-78).